Reading from the N-terminus, the 150-residue chain is MSLLKLCKGDLLTRVLATGTFDLLHPGHLHYLSEARKLGNELYVIVARESMIKHKPKPVIPENQRVTMVNSLDVVDKAVLGSETNIYEPIKNIKPDVITIGYDQKFSSDSIEKNLEELGINAKVVRINKLSDCSLCSSGKIIDRILERYC.

Residues 20-21, 25-28, and Asp103 each bind ATP; these read TF and HPGH.

Belongs to the archaeal FAD synthase family. In terms of assembly, homodimer. A divalent metal cation is required as a cofactor.

It catalyses the reaction FMN + ATP + H(+) = FAD + diphosphate. Its pathway is cofactor biosynthesis; FAD biosynthesis; FAD from FMN: step 1/1. Catalyzes the transfer of the AMP portion of ATP to flavin mononucleotide (FMN) to produce flavin adenine dinucleotide (FAD) coenzyme. The sequence is that of FAD synthase from Methanohalobium evestigatum (strain ATCC BAA-1072 / DSM 3721 / NBRC 107634 / OCM 161 / Z-7303).